A 389-amino-acid polypeptide reads, in one-letter code: Geranylgeranyl pyrophosphate synthase A (389 aa).

Isopentenyl diphosphate contacts are provided by Lys-99, Arg-102, and His-131. Asp-138 and Asp-142 together coordinate Mg(2+). A dimethylallyl diphosphate-binding site is contributed by Arg-147. Isopentenyl diphosphate is bound at residue Arg-148.

Belongs to the FPP/GGPP synthase family. Mg(2+) is required as a cofactor.

It is found in the cytoplasm. It catalyses the reaction isopentenyl diphosphate + (2E)-geranyl diphosphate = (2E,6E)-farnesyl diphosphate + diphosphate. It carries out the reaction isopentenyl diphosphate + (2E,6E)-farnesyl diphosphate = (2E,6E,10E)-geranylgeranyl diphosphate + diphosphate. The protein operates within isoprenoid biosynthesis; farnesyl diphosphate biosynthesis; farnesyl diphosphate from geranyl diphosphate and isopentenyl diphosphate: step 1/1. Its pathway is isoprenoid biosynthesis; geranylgeranyl diphosphate biosynthesis; geranylgeranyl diphosphate from farnesyl diphosphate and isopentenyl diphosphate: step 1/1. Catalyzes the trans-addition of the 2 molecules of isopentenyl diphosphate (IPP) onto geranyl diphosphate (GDP) to form geranylgeranyl pyrophosphate (GGDP). Does not catalyze the conversion of dimethylallyl diphosphate (DMAPP). In Phomopsis amygdali (Fusicoccum amygdali), this protein is Geranylgeranyl pyrophosphate synthase A (GGS-A).